A 715-amino-acid chain; its full sequence is Integrator complex subunit 13 (715 aa).

Disordered regions lie at residues 572 to 612 and 626 to 659; these read KPPE…SERI and AEVIKDSPDSPEPPNKKPHIVIEDTGPAEKSKGP. The short motif at 581-591 is the Nuclear localization signal (NLS) element; sequence KRGRKREDKEE. A cleavage module binding motif (CMBM) region spans residues 658–703; the sequence is GPMSLLSLWSSRINTANSRKHQEFVGRLNSVNNKAELYQHLKEENG.

Belongs to the Integrator subunit 13 family. Component of the Integrator complex, composed of core subunits INTS1, INTS2, INTS3, INTS4, INTS5, INTS6, INTS7, INTS8, INTS9/RC74, INTS10, INTS11/CPSF3L, INTS12, INTS13, INTS14 and INTS15. The core complex associates with protein phosphatase 2A subunits PPP2CA and PPP2R1A, to form the Integrator-PP2A (INTAC) complex. INTS13 is part of the tail subcomplex, composed of INTS10, INTS13, INTS14 and INTS15.

It localises to the nucleus. It is found in the cytoplasm. Component of the integrator complex, a multiprotein complex that terminates RNA polymerase II (Pol II) transcription in the promoter-proximal region of genes. The integrator complex provides a quality checkpoint during transcription elongation by driving premature transcription termination of transcripts that are unfavorably configured for transcriptional elongation: the complex terminates transcription by (1) catalyzing dephosphorylation of the C-terminal domain (CTD) of Pol II subunit POLR2A/RPB1 and SUPT5H/SPT5, (2) degrading the exiting nascent RNA transcript via endonuclease activity and (3) promoting the release of Pol II from bound DNA. The integrator complex is also involved in terminating the synthesis of non-coding Pol II transcripts, such as enhancer RNAs (eRNAs), small nuclear RNAs (snRNAs), telomerase RNAs and long non-coding RNAs (lncRNAs). Within the integrator complex, INTS13 is part of the integrator tail module and acts as a platform for the recruitment of transcription factors at promoters. Plays a role in gastrulation and early embryogenesis. The protein is Integrator complex subunit 13 of Xenopus laevis (African clawed frog).